The primary structure comprises 157 residues: Peptide methionine sulfoxide reductase MsrA (157 aa).

C10 is a catalytic residue.

The protein belongs to the MsrA Met sulfoxide reductase family.

It catalyses the reaction L-methionyl-[protein] + [thioredoxin]-disulfide + H2O = L-methionyl-(S)-S-oxide-[protein] + [thioredoxin]-dithiol. It carries out the reaction [thioredoxin]-disulfide + L-methionine + H2O = L-methionine (S)-S-oxide + [thioredoxin]-dithiol. Has an important function as a repair enzyme for proteins that have been inactivated by oxidation. Catalyzes the reversible oxidation-reduction of methionine sulfoxide in proteins to methionine. The polypeptide is Peptide methionine sulfoxide reductase MsrA (Clostridium botulinum (strain Loch Maree / Type A3)).